Reading from the N-terminus, the 69-residue chain is uncharacterized protein (69 aa).

This is an uncharacterized protein from Saccharolobus islandicus (Sulfolobus islandicus).